A 301-amino-acid polypeptide reads, in one-letter code: Protease HtpX (301 aa).

2 consecutive transmembrane segments (helical) span residues Ile4 to Leu24 and Leu38 to Phe58. Zn(2+) is bound at residue His147. Glu148 is an active-site residue. His151 serves as a coordination point for Zn(2+). The next 2 helical transmembrane spans lie at Gly155–Ala175 and Phe200–Trp220. Position 226 (Glu226) interacts with Zn(2+).

It belongs to the peptidase M48B family. Zn(2+) is required as a cofactor.

Its subcellular location is the cell inner membrane. The sequence is that of Protease HtpX from Acinetobacter baumannii (strain AB307-0294).